Consider the following 189-residue polypeptide: MSTLAKIEALLFVRGEDWIRVRQLAELLSLPPTGIQQSLEKLSQKYEKDLDSSLDLIETGGAYRLVTKPQFSEILKEYSKAPINQSLSRPALETLSIIAYKQPITRIEIDAIRGVNSSGALAKLQAFDLIREDGKKEVLGRPNLYVTTDYFLDYMGINHLEELPVIDELEIQAQESQLFGERIEEDENQ.

This sequence belongs to the ScpB family. As to quaternary structure, homodimer. Homodimerization may be required to stabilize the binding of ScpA to the Smc head domains. Component of a cohesin-like complex composed of ScpA, ScpB and the Smc homodimer, in which ScpA and ScpB bind to the head domain of Smc. The presence of the three proteins is required for the association of the complex with DNA.

The protein resides in the cytoplasm. Its function is as follows. Participates in chromosomal partition during cell division. May act via the formation of a condensin-like complex containing Smc and ScpA that pull DNA away from mid-cell into both cell halves. This Streptococcus mitis protein is Segregation and condensation protein B.